Consider the following 393-residue polypeptide: LL-diaminopimelate aminotransferase (393 aa).

2 residues coordinate substrate: Y14 and G41. Pyridoxal 5'-phosphate contacts are provided by residues Y71, 104 to 105 (AK), Y128, N174, Y205, and 233 to 235 (SFS). Substrate contacts are provided by K105, Y128, and N174. K236 is subject to N6-(pyridoxal phosphate)lysine. Residues R244 and N275 each coordinate pyridoxal 5'-phosphate. Substrate contacts are provided by N275 and R369.

This sequence belongs to the class-I pyridoxal-phosphate-dependent aminotransferase family. LL-diaminopimelate aminotransferase subfamily. As to quaternary structure, homodimer. The cofactor is pyridoxal 5'-phosphate.

The catalysed reaction is (2S,6S)-2,6-diaminopimelate + 2-oxoglutarate = (S)-2,3,4,5-tetrahydrodipicolinate + L-glutamate + H2O + H(+). Its pathway is amino-acid biosynthesis; L-lysine biosynthesis via DAP pathway; LL-2,6-diaminopimelate from (S)-tetrahydrodipicolinate (aminotransferase route): step 1/1. Its function is as follows. Involved in the synthesis of meso-diaminopimelate (m-DAP or DL-DAP), required for both lysine and peptidoglycan biosynthesis. Catalyzes the direct conversion of tetrahydrodipicolinate to LL-diaminopimelate. This is LL-diaminopimelate aminotransferase from Chlamydia muridarum (strain MoPn / Nigg).